The primary structure comprises 98 residues: Protein translation factor SUI1 homolog (98 aa).

It belongs to the SUI1 family.

The sequence is that of Protein translation factor SUI1 homolog from Thermococcus kodakarensis (strain ATCC BAA-918 / JCM 12380 / KOD1) (Pyrococcus kodakaraensis (strain KOD1)).